A 286-amino-acid polypeptide reads, in one-letter code: Shikimate dehydrogenase (NADP(+)) (286 aa).

Shikimate is bound by residues 20–22 (SLS) and serine 67. The Proton acceptor role is filled by lysine 71. Shikimate is bound by residues asparagine 92 and aspartate 107. NADP(+) is bound by residues 131 to 135 (GGGGA) and alanine 230. Residue tyrosine 232 coordinates shikimate. Residue glycine 253 coordinates NADP(+).

Belongs to the shikimate dehydrogenase family. In terms of assembly, homodimer.

The enzyme catalyses shikimate + NADP(+) = 3-dehydroshikimate + NADPH + H(+). It functions in the pathway metabolic intermediate biosynthesis; chorismate biosynthesis; chorismate from D-erythrose 4-phosphate and phosphoenolpyruvate: step 4/7. Involved in the biosynthesis of the chorismate, which leads to the biosynthesis of aromatic amino acids. Catalyzes the reversible NADPH linked reduction of 3-dehydroshikimate (DHSA) to yield shikimate (SA). This chain is Shikimate dehydrogenase (NADP(+)), found in Lactococcus lactis subsp. lactis (strain IL1403) (Streptococcus lactis).